We begin with the raw amino-acid sequence, 210 residues long: Na(+)-translocating NADH-quinone reductase subunit D (210 aa).

6 helical membrane passes run 11-31, 42-62, 72-92, 103-123, 131-151, and 178-198; these read ILAPVLDNNPIALQVLGVCSA, FVMTIAVMFVTALSNFFVSLI, IIVQMAIIASLVIVVDQVLKA, VFVGLIITNCIVMGRAEAFAM, FIDGLGNGLGYGFVLITVGFF, and NGLMLLAPSAFFLIGFLIWAI.

Belongs to the NqrDE/RnfAE family. In terms of assembly, composed of six subunits; NqrA, NqrB, NqrC, NqrD, NqrE and NqrF.

The protein resides in the cell inner membrane. The catalysed reaction is a ubiquinone + n Na(+)(in) + NADH + H(+) = a ubiquinol + n Na(+)(out) + NAD(+). NQR complex catalyzes the reduction of ubiquinone-1 to ubiquinol by two successive reactions, coupled with the transport of Na(+) ions from the cytoplasm to the periplasm. NqrA to NqrE are probably involved in the second step, the conversion of ubisemiquinone to ubiquinol. This Vibrio atlanticus (strain LGP32) (Vibrio splendidus (strain Mel32)) protein is Na(+)-translocating NADH-quinone reductase subunit D.